Reading from the N-terminus, the 136-residue chain is Protein YebF (136 aa).

The first 23 residues, 1–23 (MKKTGLALVLATILLGMMGSVHA), serve as a signal peptide directing secretion. The YebF/Cmi domain occupies 30 to 117 (KVPACIGLNQ…KSGTMTYTGL (88 aa)). Residues C34 and C107 are joined by a disulfide bond. A disordered region spans residues 117–136 (LNAQTRPDPQIGLNSQAGPK).

This sequence belongs to the YebF family.

The protein localises to the secreted. The polypeptide is Protein YebF (Yersinia pseudotuberculosis serotype O:1b (strain IP 31758)).